Reading from the N-terminus, the 340-residue chain is Methionine import ATP-binding protein MetN 2 (340 aa).

Positions Ile-2–Val-241 constitute an ABC transporter domain. ATP is bound at residue Gly-38–Ser-45.

This sequence belongs to the ABC transporter superfamily. Methionine importer (TC 3.A.1.24) family. The complex is composed of two ATP-binding proteins (MetN), two transmembrane proteins (MetI) and a solute-binding protein (MetQ).

Its subcellular location is the cell membrane. It carries out the reaction L-methionine(out) + ATP + H2O = L-methionine(in) + ADP + phosphate + H(+). The catalysed reaction is D-methionine(out) + ATP + H2O = D-methionine(in) + ADP + phosphate + H(+). Functionally, part of the ABC transporter complex MetNIQ involved in methionine import. Responsible for energy coupling to the transport system. The polypeptide is Methionine import ATP-binding protein MetN 2 (Listeria monocytogenes serovar 1/2a (strain ATCC BAA-679 / EGD-e)).